Reading from the N-terminus, the 418-residue chain is Gamma-glutamyl phosphate reductase (418 aa).

Belongs to the gamma-glutamyl phosphate reductase family.

Its subcellular location is the cytoplasm. It catalyses the reaction L-glutamate 5-semialdehyde + phosphate + NADP(+) = L-glutamyl 5-phosphate + NADPH + H(+). The protein operates within amino-acid biosynthesis; L-proline biosynthesis; L-glutamate 5-semialdehyde from L-glutamate: step 2/2. Catalyzes the NADPH-dependent reduction of L-glutamate 5-phosphate into L-glutamate 5-semialdehyde and phosphate. The product spontaneously undergoes cyclization to form 1-pyrroline-5-carboxylate. In Nitrosococcus oceani (strain ATCC 19707 / BCRC 17464 / JCM 30415 / NCIMB 11848 / C-107), this protein is Gamma-glutamyl phosphate reductase.